The following is a 291-amino-acid chain: Small ribosomal subunit protein uS2 (291 aa).

Residues 241 to 270 (KREPRQINRPVMSSENQAEQQTSVANENVQ) are disordered. Residues 251–270 (VMSSENQAEQQTSVANENVQ) show a composition bias toward polar residues.

The protein belongs to the universal ribosomal protein uS2 family.

This chain is Small ribosomal subunit protein uS2, found in Mycoplasma capricolum subsp. capricolum (strain California kid / ATCC 27343 / NCTC 10154).